The sequence spans 510 residues: NAD(P)H-quinone oxidoreductase subunit 2, chloroplastic (510 aa).

The next 13 membrane-spanning stretches (helical) occupy residues 24–44 (LLLFHGSFIFPECILIFGLIL), 59–79 (WFYFISSTSLVMSITALLFRW), 99–119 (IFQFLILLCSTLCIPLSVEYI), 124–144 (MAITEFLLFVLTATLGGMFLC), 149–169 (XITIFVAPECFSLCSYLLSGY), 183–203 (YLLMGGASSSILVHGFSWLYG), 229–249 (ISIALISITVGIGFKLSPAPF), 295–315 (WHLLLEILAILSMILGNLIAI), 323–343 (MLAYSSIGQIGYVIIGIIVGD), 347–367 (GYASMITYMLFYISMNLGTFA), 395–415 (ALSSALCLLSLGGLPPLAGFF), 418–438 (LHLFWCGWQAGLYFLVSIGLL), and 484–504 (MTVCVIAXTIPGISMNPILAI).

The protein belongs to the complex I subunit 2 family. In terms of assembly, NDH is composed of at least 16 different subunits, 5 of which are encoded in the nucleus.

It localises to the plastid. The protein resides in the chloroplast thylakoid membrane. It catalyses the reaction a plastoquinone + NADH + (n+1) H(+)(in) = a plastoquinol + NAD(+) + n H(+)(out). It carries out the reaction a plastoquinone + NADPH + (n+1) H(+)(in) = a plastoquinol + NADP(+) + n H(+)(out). Functionally, NDH shuttles electrons from NAD(P)H:plastoquinone, via FMN and iron-sulfur (Fe-S) centers, to quinones in the photosynthetic chain and possibly in a chloroplast respiratory chain. The immediate electron acceptor for the enzyme in this species is believed to be plastoquinone. Couples the redox reaction to proton translocation, and thus conserves the redox energy in a proton gradient. This chain is NAD(P)H-quinone oxidoreductase subunit 2, chloroplastic, found in Narcissus elegans (Daffodil).